Here is a 523-residue protein sequence, read N- to C-terminus: ATP synthase subunit alpha (523 aa).

173-180 provides a ligand contact to ATP; the sequence is GDRQTGKT.

It belongs to the ATPase alpha/beta chains family. F-type ATPases have 2 components, CF(1) - the catalytic core - and CF(0) - the membrane proton channel. CF(1) has five subunits: alpha(3), beta(3), gamma(1), delta(1), epsilon(1). CF(0) has three main subunits: a(1), b(2) and c(9-12). The alpha and beta chains form an alternating ring which encloses part of the gamma chain. CF(1) is attached to CF(0) by a central stalk formed by the gamma and epsilon chains, while a peripheral stalk is formed by the delta and b chains.

It localises to the cell membrane. It carries out the reaction ATP + H2O + 4 H(+)(in) = ADP + phosphate + 5 H(+)(out). In terms of biological role, produces ATP from ADP in the presence of a proton gradient across the membrane. The alpha chain is a regulatory subunit. The polypeptide is ATP synthase subunit alpha (Streptomyces griseus subsp. griseus (strain JCM 4626 / CBS 651.72 / NBRC 13350 / KCC S-0626 / ISP 5235)).